Here is a 292-residue protein sequence, read N- to C-terminus: Hydroxysqualene synthase (292 aa).

The protein belongs to the phytoene/squalene synthase family. HpnC subfamily.

It carries out the reaction presqualene diphosphate + H2O = hydroxysqualene + diphosphate. It participates in secondary metabolite biosynthesis; hopanoid biosynthesis. In terms of biological role, involved in the biosynthesis of the hopanoid precursor squalene (SQ) from farnesyl diphosphate (FPP). Catalyzes the second step, the conversion of presqualene diphosphate (PSPP) to hydroxysqualene (HSQ). The protein is Hydroxysqualene synthase of Sinorhizobium fredii (strain NBRC 101917 / NGR234).